Consider the following 229-residue polypeptide: MKAIILAAGLGTRLRPMTENTPKALVQVNQKPLIEYQIEFLKEKGINDIIIIVGYLKEQFDYLKEKYGVRLVFNDKYADYNNFYSLYLVKEELANSYVIDADNYLFKNMFRNDLTRSTYFSVYREDCTNEWFLVYGDDYKVQDIIVDSKAGRILSGVSFWDAPTAEKIVSFIDKAYASGEFVDLYWDNMVKDNIKELDVYVEELEGNSIYEIDSVQDYRKLEEILKNEN.

L6, A8, G9, Y80, N82, S85, and A101 together coordinate CDP-choline. Position 102 (D102) interacts with Mg(2+). CDP-choline is bound at residue Y185. The Mg(2+) site is built by E211 and D213.

The protein belongs to the LicC/PntC cytidylyltransferase family. As to quaternary structure, monomer. Forms dimers in LicC-CDP-Cho-Mg(2+) crystals, but the monomer is probably the biologically functional unit. Mg(2+) serves as cofactor.

It catalyses the reaction phosphocholine + CTP + H(+) = CDP-choline + diphosphate. It participates in cell wall biogenesis; teichoic acid biosynthesis. Its pathway is cell wall biogenesis; lipoteichoic acid biosynthesis. With respect to regulation, mg(2+) in slight excess of CTP gives maximal activity. Strongly inhibited by Ca(2+) and several other metal ions, such as Cd(2+), Co(2+), Cu(2+), Mn(2+), Ni(2+), Zn(2+) and Fe(2+). Also inhibited by Mg(2+) at high concentrations. CDP-Cho is a competitive inhibitor with respect to CTP, whereas diphosphate is a mixed-type inhibitor with respect to CTP. Functionally, cytidylyltransferase involved in the biosynthesis of the phosphocholine containing cell wall constituents, teichoic acid and lipoteichoic acid, which are essential for cell separation and pathogenesis. Catalyzes the activation of phosphocholine (P-Cho) to CDP-choline (CDP-Cho). Can also use phosphoethanolamine and 2-aminoethylphosphonate, with much lower efficiency. Shows lower activity with dCTP, weak activity with ATP and no activity with GTP, TTP, UTP, dATP, dGTP and dTTP. In Streptococcus pneumoniae (strain ATCC BAA-255 / R6), this protein is Choline-phosphate cytidylyltransferase.